Reading from the N-terminus, the 168-residue chain is Photosystem I assembly protein Ycf3 (168 aa).

TPR repeat units lie at residues 35-68, 72-105, and 120-153; these read AFTY…EIDP, SYIL…NPFL, and GEEA…TPGN.

It belongs to the Ycf3 family.

It localises to the plastid. The protein localises to the chloroplast thylakoid membrane. In terms of biological role, essential for the assembly of the photosystem I (PSI) complex. May act as a chaperone-like factor to guide the assembly of the PSI subunits. In Nuphar advena (Common spatterdock), this protein is Photosystem I assembly protein Ycf3.